The primary structure comprises 131 residues: MRKTSLLNSNISSVISKMGHTDMLAIGDCGLPIPKETERIDLALIKGVPGFIETLKAILEELQVEEVLIAKETEKVSPELFIEIKEIIKDTKITFISHEELKKELKYCKAVVRTGEQTPYANIILKSGVVF.

His-20 serves as the catalytic Proton donor. Substrate contacts are provided by residues Asp-28, His-98, and 120–122; that span reads YAN.

Belongs to the RbsD / FucU family. RbsD subfamily. In terms of assembly, homodecamer.

The protein localises to the cytoplasm. The enzyme catalyses beta-D-ribopyranose = beta-D-ribofuranose. Its pathway is carbohydrate metabolism; D-ribose degradation; D-ribose 5-phosphate from beta-D-ribopyranose: step 1/2. Catalyzes the interconversion of beta-pyran and beta-furan forms of D-ribose. In Clostridium perfringens (strain 13 / Type A), this protein is D-ribose pyranase.